The sequence spans 436 residues: UDP-glucuronate 4-epimerase 5 (436 aa).

The next 2 membrane-spanning stretches (helical) occupy residues 36 to 56 (LTLWASLFLALFLFYLVLSPP) and 95 to 115 (GLTVLVTGASGFVGTHVSIAL). 97 to 128 (TVLVTGASGFVGTHVSIALRRRGDGVLGLDNF) contributes to the NAD(+) binding site. The Proton acceptor role is filled by Y247.

This sequence belongs to the NAD(P)-dependent epimerase/dehydratase family. As to quaternary structure, homodimer. In leaves, pollen and siliques, but not in roots or flowers.

It localises to the golgi apparatus. Its subcellular location is the golgi stack membrane. The catalysed reaction is UDP-alpha-D-glucuronate = UDP-alpha-D-galacturonate. Involved in the synthesis of the negatively charged monosaccharide that forms the backbone of pectic cell wall components. In Arabidopsis thaliana (Mouse-ear cress), this protein is UDP-glucuronate 4-epimerase 5 (GAE5).